The chain runs to 84 residues: Putative antitoxin VapB37 (84 aa).

In terms of biological role, probable antitoxin component of a type II toxin-antitoxin (TA) system. Its putative cognate toxin is VapC37. This Mycobacterium tuberculosis (strain CDC 1551 / Oshkosh) protein is Putative antitoxin VapB37 (vapB37).